Consider the following 403-residue polypeptide: Serine/threonine transporter SstT (403 aa).

Transmembrane regions (helical) follow at residues 11 to 31 (GNLV…AFIS), 51 to 71 (AIAP…KEVG), 81 to 101 (VMYV…SFIF), 138 to 158 (ALAN…GIPL), 175 to 195 (AVSY…FGLV), 213 to 233 (LLGV…PILV), 285 to 305 (VAIP…VTVL), and 319 to 339 (FMTA…ASGV).

Belongs to the dicarboxylate/amino acid:cation symporter (DAACS) (TC 2.A.23) family.

Its subcellular location is the cell inner membrane. It carries out the reaction L-serine(in) + Na(+)(in) = L-serine(out) + Na(+)(out). The catalysed reaction is L-threonine(in) + Na(+)(in) = L-threonine(out) + Na(+)(out). Functionally, involved in the import of serine and threonine into the cell, with the concomitant import of sodium (symport system). In Haemophilus ducreyi (strain 35000HP / ATCC 700724), this protein is Serine/threonine transporter SstT.